The chain runs to 286 residues: Putative L-ribulose-5-phosphate 3-epimerase SgbU (286 aa).

It belongs to the L-ribulose-5-phosphate 3-epimerase family.

The enzyme catalyses L-ribulose 5-phosphate = L-xylulose 5-phosphate. In terms of biological role, catalyzes the isomerization of L-xylulose-5-phosphate to L-ribulose-5-phosphate. The protein is Putative L-ribulose-5-phosphate 3-epimerase SgbU (sgbU) of Haemophilus influenzae (strain ATCC 51907 / DSM 11121 / KW20 / Rd).